We begin with the raw amino-acid sequence, 229 residues long: Ribonuclease 3 (229 aa).

In terms of domain architecture, RNase III spans 5–127; that stretch reads LDRLERKLGY…LIGAIYLDTG (123 aa). Glutamate 40 provides a ligand contact to Mg(2+). Residue aspartate 44 is part of the active site. Residues aspartate 113 and glutamate 116 each contribute to the Mg(2+) site. Glutamate 116 is a catalytic residue. The 71-residue stretch at 154-224 folds into the DRBM domain; sequence DPKTRLQEFL…AAAALVALGV (71 aa).

The protein belongs to the ribonuclease III family. Homodimer. The cofactor is Mg(2+).

It is found in the cytoplasm. It catalyses the reaction Endonucleolytic cleavage to 5'-phosphomonoester.. Functionally, digests double-stranded RNA. Involved in the processing of primary rRNA transcript to yield the immediate precursors to the large and small rRNAs (23S and 16S). Processes some mRNAs, and tRNAs when they are encoded in the rRNA operon. Processes pre-crRNA and tracrRNA of type II CRISPR loci if present in the organism. In Pseudomonas aeruginosa (strain LESB58), this protein is Ribonuclease 3.